Here is a 25-residue protein sequence, read N- to C-terminus: Alpha-amylase inhibitor (25 aa).

In terms of assembly, monomer or homodimer. May exist both in a glycosylated and in an unglycosylated form.

It localises to the secreted. Inhibits alpha-amylases but not trypsin. Is more effective against insect alpha-amylases than those of mammals. This Secale cereale (Rye) protein is Alpha-amylase inhibitor.